The following is a 417-amino-acid chain: Serine hydroxymethyltransferase (417 aa).

Residues leucine 117 and 121–123 contribute to the (6S)-5,6,7,8-tetrahydrofolate site; that span reads GHL. Lysine 226 carries the N6-(pyridoxal phosphate)lysine modification.

This sequence belongs to the SHMT family. Homodimer. The cofactor is pyridoxal 5'-phosphate.

The protein localises to the cytoplasm. It carries out the reaction (6R)-5,10-methylene-5,6,7,8-tetrahydrofolate + glycine + H2O = (6S)-5,6,7,8-tetrahydrofolate + L-serine. The protein operates within one-carbon metabolism; tetrahydrofolate interconversion. It functions in the pathway amino-acid biosynthesis; glycine biosynthesis; glycine from L-serine: step 1/1. Its function is as follows. Catalyzes the reversible interconversion of serine and glycine with tetrahydrofolate (THF) serving as the one-carbon carrier. This reaction serves as the major source of one-carbon groups required for the biosynthesis of purines, thymidylate, methionine, and other important biomolecules. Also exhibits THF-independent aldolase activity toward beta-hydroxyamino acids, producing glycine and aldehydes, via a retro-aldol mechanism. This chain is Serine hydroxymethyltransferase, found in Syntrophus aciditrophicus (strain SB).